The following is a 522-amino-acid chain: Glutamate--cysteine ligase (522 aa).

It belongs to the glutamate--cysteine ligase type 1 family. Type 1 subfamily.

The catalysed reaction is L-cysteine + L-glutamate + ATP = gamma-L-glutamyl-L-cysteine + ADP + phosphate + H(+). The protein operates within sulfur metabolism; glutathione biosynthesis; glutathione from L-cysteine and L-glutamate: step 1/2. The protein is Glutamate--cysteine ligase of Shewanella pealeana (strain ATCC 700345 / ANG-SQ1).